The chain runs to 281 residues: Glyceraldehyde dehydrogenase medium chain (281 aa).

The region spanning methionine 1–glycine 176 is the FAD-binding PCMH-type domain. Residues alanine 31 to serine 35 and threonine 110 to alanine 114 contribute to the FAD site.

As to quaternary structure, heterotrimer composed of a large chain (CutA), a medium chain (CutB) and a small chain (CutC). Requires FAD as cofactor.

Its subcellular location is the cytoplasm. It carries out the reaction D-glyceraldehyde + A + H2O = (R)-glycerate + AH2 + H(+). Component of the glyceraldehyde dehydrogenase which is involved the nonphosphorylated Entner-Doudoroff pathway. Catalyzes the oxidation of D-glyceraldehyde to yield glycerate. When the artificial electron acceptor 2,6-dichlorophenol-indophenol (Cl2Ind) is used, the enzyme shows a broad substrate range (glyceraldehyde-3-phosphate, formaldehyde, acetaldehyde, propionaldehyde and isobutyraldehyde), but is most active with D-glyceraldehyde. It is not known which acceptor is utilized in vivo. The polypeptide is Glyceraldehyde dehydrogenase medium chain (cutB) (Sulfolobus acidocaldarius (strain ATCC 33909 / DSM 639 / JCM 8929 / NBRC 15157 / NCIMB 11770)).